A 155-amino-acid chain; its full sequence is Small ribosomal subunit protein uS7 (155 aa).

Belongs to the universal ribosomal protein uS7 family. Part of the 30S ribosomal subunit. Contacts proteins S9 and S11.

In terms of biological role, one of the primary rRNA binding proteins, it binds directly to 16S rRNA where it nucleates assembly of the head domain of the 30S subunit. Is located at the subunit interface close to the decoding center, probably blocks exit of the E-site tRNA. The polypeptide is Small ribosomal subunit protein uS7 (Helicobacter acinonychis (strain Sheeba)).